Consider the following 147-residue polypeptide: Hemoglobin subunit epsilon-Y2 (147 aa).

Positions 3–147 constitute a Globin domain; sequence NFTAEEKTLI…VATALSHKYH (145 aa). A Phosphoserine modification is found at Ser-51. Heme b contacts are provided by His-64 and His-93.

Belongs to the globin family. High expression in yolk sac blood islands, fetal liver, and embryonic erythrocytes. Very low levels in adult liver and spleen.

Its function is as follows. Hemoglobin epsilon chain is a beta-type chain found in early embryos. In Mus musculus (Mouse), this protein is Hemoglobin subunit epsilon-Y2 (Hbb-y).